The chain runs to 133 residues: Ribonuclease P protein component (133 aa).

The protein belongs to the RnpA family. Consists of a catalytic RNA component (M1 or rnpB) and a protein subunit.

It catalyses the reaction Endonucleolytic cleavage of RNA, removing 5'-extranucleotides from tRNA precursor.. In terms of biological role, RNaseP catalyzes the removal of the 5'-leader sequence from pre-tRNA to produce the mature 5'-terminus. It can also cleave other RNA substrates such as 4.5S RNA. The protein component plays an auxiliary but essential role in vivo by binding to the 5'-leader sequence and broadening the substrate specificity of the ribozyme. This chain is Ribonuclease P protein component, found in Pseudomonas putida (strain ATCC 47054 / DSM 6125 / CFBP 8728 / NCIMB 11950 / KT2440).